The chain runs to 422 residues: F-box protein At3g12350 (422 aa).

In terms of domain architecture, F-box spans 5-52 (ALPFCEIPEDLQLRILSLLTPAEISSFACTSKRFASLCQEDGKIWHVM). Composition is skewed to basic and acidic residues over residues 197–207 (NNRREDQRSSG) and 242–252 (KEKERQASRTK). Disordered regions lie at residues 197–216 (NNRR…LISS) and 226–252 (LANK…SRTK).

The protein is F-box protein At3g12350 of Arabidopsis thaliana (Mouse-ear cress).